Here is a 299-residue protein sequence, read N- to C-terminus: Fibrinogen silencer-binding protein (299 aa).

Residue lysine 94 forms a Glycyl lysine isopeptide (Lys-Gly) (interchain with G-Cter in SUMO2) linkage. The interval 189–211 (EGSESPSLSSVDMRMTSSPSSVP) is disordered. Residues 192–209 (ESPSLSSVDMRMTSSPSS) show a composition bias toward polar residues.

As to quaternary structure, interacts with APBA1 (via PDZ 1 and 2 domains).

The protein localises to the nucleus. Functionally, transcriptional repressor that down-regulates the expression of the fibrinogen gamma chain. Represses transcription of GSK3B gene promoter via its interaction with APBA1. In Mus musculus (Mouse), this protein is Fibrinogen silencer-binding protein (Fsbp).